The sequence spans 273 residues: MYRLAAFDMDGTLLMRDHKIGSITLNALHQLADAGVTLTFATGRHYLDMKGILSHSGLNGYLITGNGTRVCDAEGNPLYGMDLPAELVEFVLRTPWQTNASIHLFRDDGWFTDRNDPDLLIAHTTSGFHFQLTEWDELPLTGNHKFCFIASHQELVELKAQLEQQMSGEADFCFSATDCLEVLPRGCNKGVALEKLSHHLDLTLADCMAFGDAMNDKEMLSRVGRGLVMGNALPQLKQELPQLQIIGRCEQQGVAHYLHHWLSSPHLTYSPEF.

D8 (nucleophile) is an active-site residue. Residues D8, D10, and D212 each coordinate Mg(2+).

It belongs to the HAD-like hydrolase superfamily. Cof family. Mg(2+) is required as a cofactor.

The catalysed reaction is 4-amino-2-methyl-5-(diphosphooxymethyl)pyrimidine + H2O = 4-amino-2-methyl-5-(phosphooxymethyl)pyrimidine + phosphate + H(+). Functionally, catalyzes the hydrolysis of 4-amino-2-methyl-5-hydroxymethylpyrimidine pyrophosphate (HMP-PP) to 4-amino-2-methyl-5-hydroxymethylpyrimidine phosphate (HMP-P). The protein is HMP-PP phosphatase of Yersinia pseudotuberculosis serotype O:1b (strain IP 31758).